Reading from the N-terminus, the 172-residue chain is NADH-ubiquinone oxidoreductase chain 6 (172 aa).

The next 5 membrane-spanning stretches (helical) occupy residues 1-21 (MTYF…AVAS), 25-45 (PYFA…VLVG), 53-73 (LVLF…AALA), 86-106 (VLGY…IFWG), and 140-160 (GGML…VLEL).

It belongs to the complex I subunit 6 family.

It localises to the mitochondrion membrane. The enzyme catalyses a ubiquinone + NADH + 5 H(+)(in) = a ubiquinol + NAD(+) + 4 H(+)(out). Functionally, core subunit of the mitochondrial membrane respiratory chain NADH dehydrogenase (Complex I) that is believed to belong to the minimal assembly required for catalysis. Complex I functions in the transfer of electrons from NADH to the respiratory chain. The immediate electron acceptor for the enzyme is believed to be ubiquinone. In Cyprinus carpio (Common carp), this protein is NADH-ubiquinone oxidoreductase chain 6 (MT-ND6).